Reading from the N-terminus, the 183-residue chain is Histone deacetylase complex subunit SAP30L (183 aa).

Met1 bears the N-acetylmethionine mark. A compositionally biased stretch (acidic residues) spans 1–10; sequence MNGFSTEEDS. Residues 1–23 are disordered; it reads MNGFSTEEDSREGPPAAPAAAAP. Cystine bridges form between Cys29–Cys30 and Cys38–Cys74. The segment at 29–77 adopts an Atypical zinc-finger fold; that stretch reads CCLIEDGERCVRPAGNASFSKRVQKSISQKKLKLDIDKSVRHLYICDFH. Lys49 participates in a covalent cross-link: Glycyl lysine isopeptide (Lys-Gly) (interchain with G-Cter in SUMO2). The segment at 85-105 is disordered; sequence RNKRKRKTSDDGGDSPEHDTD. A Nuclear localization signal (NLS) motif is present at residues 86-91; it reads NKRKRK. Positions 88-90 are important for DNA and phosphoinositide binding; the sequence is RKR. Thr92 is modified (phosphothreonine). 2 positions are modified to phosphoserine: Ser93 and Ser99. Residue Thr104 is modified to Phosphothreonine. Residues Lys155, Lys166, and Lys175 each participate in a glycyl lysine isopeptide (Lys-Gly) (interchain with G-Cter in SUMO2) cross-link.

The protein belongs to the SAP30 family. In terms of assembly, interacts with components of the histone deacetylase complex SIN3A, HDAC1 and HDAC2. Binds histones and nucleosomes. Interacts with FEZ1. Detected in brain and ovary, and at lower levels in heart, small intestine, lung, kidney, skeletal muscle, stomach and spleen (at protein level). Ubiquitous; expressed in all tissues tested with highest levels in testis.

The protein localises to the nucleus. The protein resides in the nucleolus. Functions as a transcription repressor, probably via its interaction with histone deacetylase complexes. Involved in the functional recruitment of the class 1 Sin3-histone deacetylase complex (HDAC) to the nucleolus. Binds DNA, apparently without sequence-specificity, and bends bound double-stranded DNA. Binds phosphoinositol phosphates (phosphoinositol 3-phosphate, phosphoinositol 4-phosphate and phosphoinositol 5-phosphate) via the same basic sequence motif that mediates DNA binding and nuclear import. In terms of biological role, functions as a transcription repressor; isoform 2 has lower transcription repressor activity than isoform 1 and isoform 3. Its function is as follows. Functions as a transcription repressor; its activity is marginally lower than that of isoform 1. The sequence is that of Histone deacetylase complex subunit SAP30L (SAP30L) from Homo sapiens (Human).